The chain runs to 173 residues: NADH-ubiquinone oxidoreductase chain 6 (173 aa).

The next 6 membrane-spanning stretches (helical) occupy residues 1–21 (MTYF…AVAS), 27–47 (YGVV…LSLG), 48–68 (VSFV…VVFV), 85–105 (WGVV…LIVG), 106–126 (GSIG…MFSV), and 139–159 (CGVG…FVVL).

It belongs to the complex I subunit 6 family.

It is found in the mitochondrion membrane. It catalyses the reaction a ubiquinone + NADH + 5 H(+)(in) = a ubiquinol + NAD(+) + 4 H(+)(out). Its function is as follows. Core subunit of the mitochondrial membrane respiratory chain NADH dehydrogenase (Complex I) that is believed to belong to the minimal assembly required for catalysis. Complex I functions in the transfer of electrons from NADH to the respiratory chain. The immediate electron acceptor for the enzyme is believed to be ubiquinone. This Aethia psittacula (Parakeet auklet) protein is NADH-ubiquinone oxidoreductase chain 6 (MT-ND6).